A 298-amino-acid polypeptide reads, in one-letter code: Beta-soluble NSF attachment protein (298 aa).

Belongs to the SNAP family. Interacts with PRKCABP, and disrupts the interaction between GRIA2 and PRKCABP, leading to the internalization of GRIA2.

The protein localises to the membrane. Its function is as follows. Required for vesicular transport between the endoplasmic reticulum and the Golgi apparatus. The protein is Beta-soluble NSF attachment protein (NAPB) of Homo sapiens (Human).